A 162-amino-acid chain; its full sequence is Peptide deformylase-like (162 aa).

Belongs to the polypeptide deformylase family.

The chain is Peptide deformylase-like from Staphylococcus aureus (strain MRSA252).